A 491-amino-acid polypeptide reads, in one-letter code: Protein phosphatase ppm-1.G (491 aa).

Residues 23–486 (SYACTTMQGW…DNMTVICTTF (464 aa)) form the PPM-type phosphatase domain. Mn(2+) is bound by residues Asp-57 and Gly-58. The span at 112–125 (KDIGDEGKPKKAGG) shows a compositional bias: basic and acidic residues. Disordered regions lie at residues 112-136 (KDIGDEGKPKKAGGEADSEDEADRI) and 170-294 (GDVS…EEMV). 2 stretches are compositionally biased toward acidic residues: residues 173–192 (SDDSEDEDEDEEEAEEQDDT) and 260–294 (ATEEEDEDDSDKEFVADEEEDDEDAEDEQSDEEMV). Residues Asp-428 and Asp-477 each contribute to the Mn(2+) site.

The protein belongs to the PP2C family. The cofactor is Mg(2+). Mn(2+) is required as a cofactor.

The enzyme catalyses O-phospho-L-seryl-[protein] + H2O = L-seryl-[protein] + phosphate. The catalysed reaction is O-phospho-L-threonyl-[protein] + H2O = L-threonyl-[protein] + phosphate. In Caenorhabditis elegans, this protein is Protein phosphatase ppm-1.G.